Here is a 195-residue protein sequence, read N- to C-terminus: Peroxiredoxin (195 aa).

Positions 4-162 (AMIGKPAPEF…TLRLVQAFQF (159 aa)) constitute a Thioredoxin domain. Catalysis depends on Cys-49, which acts as the Cysteine sulfenic acid (-SOH) intermediate.

This sequence belongs to the peroxiredoxin family. AhpC/Prx1 subfamily. Homodimer; disulfide-linked, upon oxidation.

It carries out the reaction a hydroperoxide + [thioredoxin]-dithiol = an alcohol + [thioredoxin]-disulfide + H2O. In terms of biological role, thiol-specific peroxidase that catalyzes the reduction of hydrogen peroxide and organic hydroperoxides to water and alcohols, respectively. Plays a role in cell protection against oxidative stress by detoxifying peroxides and as sensor of hydrogen peroxide-mediated signaling events. This chain is Peroxiredoxin, found in Ascaris suum (Pig roundworm).